Reading from the N-terminus, the 432-residue chain is Mitochondrial distribution and morphology protein 12 (432 aa).

An SMP-LTD domain is found at 1-432 (MSIEVDWRAA…VFPSFWTFLI (432 aa)). 2 disordered regions span residues 182 to 273 (WTDP…PRMR) and 354 to 377 (QQEA…PKRQ). The segment covering 214–234 (TSNPTSRPSTSSTLPSHPSAS) has biased composition (low complexity). Composition is skewed to basic and acidic residues over residues 243-253 (TGKEHGSLAED) and 355-364 (QEARGQDDRP).

It belongs to the MDM12 family. Component of the ER-mitochondria encounter structure (ERMES) or MDM complex, composed of mmm1, mdm10, mdm12 and mdm34. A mmm1 homodimer associates with one molecule of mdm12 on each side in a pairwise head-to-tail manner, and the SMP-LTD domains of mmm1 and mdm12 generate a continuous hydrophobic tunnel for phospholipid trafficking.

It localises to the mitochondrion outer membrane. The protein localises to the endoplasmic reticulum membrane. In terms of biological role, component of the ERMES/MDM complex, which serves as a molecular tether to connect the endoplasmic reticulum (ER) and mitochondria. Components of this complex are involved in the control of mitochondrial shape and protein biogenesis, and function in nonvesicular lipid trafficking between the ER and mitochondria. Mdm12 is required for the interaction of the ER-resident membrane protein mmm1 and the outer mitochondrial membrane-resident beta-barrel protein mdm10. The mdm12-mmm1 subcomplex functions in the major beta-barrel assembly pathway that is responsible for biogenesis of all mitochondrial outer membrane beta-barrel proteins, and acts in a late step after the SAM complex. The mdm10-mdm12-mmm1 subcomplex further acts in the TOM40-specific pathway after the action of the mdm12-mmm1 complex. Essential for establishing and maintaining the structure of mitochondria and maintenance of mtDNA nucleoids. The chain is Mitochondrial distribution and morphology protein 12 from Aspergillus oryzae (strain ATCC 42149 / RIB 40) (Yellow koji mold).